Consider the following 165-residue polypeptide: Thiol peroxidase (165 aa).

In terms of domain architecture, Thioredoxin spans 17-165 (PQVGEIVENF…NYEAALAVLA (149 aa)). C59 serves as the catalytic Cysteine sulfenic acid (-SOH) intermediate. C59 and C93 are joined by a disulfide.

Belongs to the peroxiredoxin family. Tpx subfamily. In terms of assembly, homodimer.

The enzyme catalyses a hydroperoxide + [thioredoxin]-dithiol = an alcohol + [thioredoxin]-disulfide + H2O. In terms of biological role, thiol-specific peroxidase that catalyzes the reduction of hydrogen peroxide and organic hydroperoxides to water and alcohols, respectively. Plays a role in cell protection against oxidative stress by detoxifying peroxides. This chain is Thiol peroxidase, found in Haemophilus influenzae (strain ATCC 51907 / DSM 11121 / KW20 / Rd).